We begin with the raw amino-acid sequence, 513 residues long: Na(+)/H(+) antiporter NhaB (513 aa).

The next 12 membrane-spanning stretches (helical) occupy residues Leu-23 to Ala-43, Ile-52 to Ile-72, Leu-97 to Phe-117, Leu-120 to Phe-140, Phe-144 to Ile-164, Leu-202 to Pro-222, Phe-238 to Leu-258, Ala-303 to Ile-323, Thr-348 to Ile-368, Leu-391 to Ile-411, Ala-447 to Ile-467, and Val-475 to Phe-495.

Belongs to the NhaB Na(+)/H(+) (TC 2.A.34) antiporter family.

It localises to the cell inner membrane. The catalysed reaction is 2 Na(+)(in) + 3 H(+)(out) = 2 Na(+)(out) + 3 H(+)(in). Its function is as follows. Na(+)/H(+) antiporter that extrudes sodium in exchange for external protons. The sequence is that of Na(+)/H(+) antiporter NhaB from Escherichia coli O45:K1 (strain S88 / ExPEC).